Here is a 143-residue protein sequence, read N- to C-terminus: Large ribosomal subunit protein uL16 (143 aa).

This sequence belongs to the universal ribosomal protein uL16 family. Part of the 50S ribosomal subunit.

Its function is as follows. Binds 23S rRNA and is also seen to make contacts with the A and possibly P site tRNAs. This Oenococcus oeni (strain ATCC BAA-331 / PSU-1) protein is Large ribosomal subunit protein uL16.